Reading from the N-terminus, the 462-residue chain is 7-hydroxymethyl chlorophyll a reductase, chloroplastic (462 aa).

The N-terminal 20 residues, 1–20 (MITVVTSRLSLLPPVFSVVN), are a transit peptide targeting the chloroplast.

The protein belongs to the FrhB family. As to quaternary structure, interacts with SGR1, the chlorophyll catabolic enzymes (CCEs) NYC1, NOL and RCCR, and the LHCII complex. Part of a SGR1-CCE-LHCII complex, which acts in chlorophyll breakdown. Requires FAD as cofactor. It depends on iron-sulfur cluster as a cofactor.

Its subcellular location is the plastid. It localises to the chloroplast. The catalysed reaction is chlorophyll a + 2 oxidized [2Fe-2S]-[ferredoxin] + H2O = 7(1)-hydroxychlorophyll a + 2 reduced [2Fe-2S]-[ferredoxin] + 2 H(+). Functionally, probable iron-sulfur flavoprotein that converts 7-hydroxymethyl chlorophyll a to chlorophyll a using ferredoxin as a reducing equivalent. Catalyzes the reduction of a hydroxymethyl group to a methyl group. Belongs to the chlorophyll catabolic enzymes (CCEs). This Arabidopsis thaliana (Mouse-ear cress) protein is 7-hydroxymethyl chlorophyll a reductase, chloroplastic (HCAR).